The chain runs to 155 residues: Ribonuclease H (155 aa).

One can recognise an RNase H type-1 domain in the interval 1–142; it reads MLKQVEIFTD…CDELARAAAS (142 aa). Aspartate 10, glutamate 48, aspartate 70, and aspartate 134 together coordinate Mg(2+).

This sequence belongs to the RNase H family. In terms of assembly, monomer. Requires Mg(2+) as cofactor.

It is found in the cytoplasm. It catalyses the reaction Endonucleolytic cleavage to 5'-phosphomonoester.. In terms of biological role, endonuclease that specifically degrades the RNA of RNA-DNA hybrids. The sequence is that of Ribonuclease H from Klebsiella pneumoniae (strain 342).